Here is a 431-residue protein sequence, read N- to C-terminus: GTPase Obg (431 aa).

The Obg domain occupies 1–158 (MFVDQVKVDV…LTIRMELKVL (158 aa)). The region spanning 159 to 335 (ADVGLVGFPS…LLAKTADLLD (177 aa)) is the OBG-type G domain. GTP-binding positions include 165-172 (GFPSVGKS), 190-194 (FTTLV), 212-215 (DLPG), 282-285 (TKMD), and 316-318 (SSI). 2 residues coordinate Mg(2+): S172 and T192. One can recognise an OCT domain in the interval 353–431 (YTTEADADFS…ILDYSFQFMD (79 aa)).

The protein belongs to the TRAFAC class OBG-HflX-like GTPase superfamily. OBG GTPase family. Monomer. The cofactor is Mg(2+).

The protein resides in the cytoplasm. Functionally, an essential GTPase which binds GTP, GDP and possibly (p)ppGpp with moderate affinity, with high nucleotide exchange rates and a fairly low GTP hydrolysis rate. Plays a role in control of the cell cycle, stress response, ribosome biogenesis and in those bacteria that undergo differentiation, in morphogenesis control. The polypeptide is GTPase Obg (Lactiplantibacillus plantarum (strain ATCC BAA-793 / NCIMB 8826 / WCFS1) (Lactobacillus plantarum)).